The sequence spans 238 residues: MGRKWANIVAKKTAKDGATSKIYAKFGVEIYAAAKQGEPDPELNTSLKFVIERAKQAQVPKHVIDKAIDKAKGGGDETFVQGRYEGFGPNGSMIIAETLTSNVNRTIANVRTIFNKKGGNIGAAGSVSYMFDNTGVIVFKGSDPDHIFEILLEAEVDVRDVTEEEGNIVIYTEPTDLHKGIAALKAAGISEFSTTELEMIAQSEVELSPEDLEIFEGLVDALEDDDDVQKVYHNVANL.

The protein belongs to the TACO1 family. YeeN subfamily.

The protein localises to the cytoplasm. This is Probable transcriptional regulatory protein YeeN from Escherichia coli O157:H7.